Consider the following 390-residue polypeptide: Centrosomal protein of 44 kDa (390 aa).

Residues 11–195 form a binds with microtubules and centrioles region; sequence RNLEQVLRLL…ISEDTLSPIT (185 aa). Residues 233–267 are a coiled coil; it reads EITALQTMLAECQEKLKELTLIEKRLDCLEQKMKG. The disordered stretch occupies residues 323-347; it reads KNKVGRPASIPLSSRYSTASSDSTP. Serine 331 and serine 345 each carry phosphoserine. Residues 335–345 are compositionally biased toward low complexity; it reads SSRYSTASSDS. Threonine 346 bears the Phosphothreonine mark. Residues 361 to 385 adopt a coiled-coil conformation; that stretch reads SEETTIQKMERMKKMFEETAELLKC.

As to quaternary structure, interacts with CROCC. Interacts with POC1B; the interaction is direct and recruits POC1B to centriolar microtubules. Binds to centriolar microtubules.

The protein localises to the cytoplasm. It is found in the cytoskeleton. It localises to the microtubule organizing center. The protein resides in the centrosome. Its subcellular location is the centriole. The protein localises to the spindle pole. It is found in the midbody. Functionally, centriole-enriched microtubule-binding protein involved in centriole biogenesis. In collaboration with CEP295 and POC1B, is required for the centriole-to-centrosome conversion by ensuring the formation of bona fide centriole wall. Functions as a linker component that maintains centrosome cohesion. Associates with CROCC and regulates its stability and localization to the centrosome. The polypeptide is Centrosomal protein of 44 kDa (CEP44) (Macaca fascicularis (Crab-eating macaque)).